We begin with the raw amino-acid sequence, 490 residues long: UDP-glycosyltransferase 86A1 (490 aa).

UDP-alpha-D-glucose is bound by residues serine 294, 352–354 (CCQ), 369–377 (HCGWNSILE), and 391–394 (LTDQ).

The protein belongs to the UDP-glycosyltransferase family.

The protein is UDP-glycosyltransferase 86A1 (UGT86A1) of Arabidopsis thaliana (Mouse-ear cress).